The primary structure comprises 267 residues: 2-keto-3-deoxy-L-rhamnonate aldolase (267 aa).

The active-site Proton acceptor is His49. Substrate is bound at residue Gln151. Position 153 (Glu153) interacts with Mg(2+). Residues Ala178 and Asp179 each coordinate substrate. Asp179 is a Mg(2+) binding site.

Belongs to the HpcH/HpaI aldolase family. KDR aldolase subfamily. In terms of assembly, homohexamer. It depends on Mg(2+) as a cofactor.

The catalysed reaction is 2-dehydro-3-deoxy-L-rhamnonate = (S)-lactaldehyde + pyruvate. Functionally, catalyzes the reversible retro-aldol cleavage of 2-keto-3-deoxy-L-rhamnonate (KDR) to pyruvate and lactaldehyde. The protein is 2-keto-3-deoxy-L-rhamnonate aldolase of Escherichia coli O6:K15:H31 (strain 536 / UPEC).